We begin with the raw amino-acid sequence, 326 residues long: MTGAPQVIALSCGEPAGIGPEIAVAAWDQLRADCPFVWIGDPRHLPSSHPWQPVSAPAEALQVSADALPVWPLEFAGNTTKGEADPQNASGVIQSIKTGVELVTSGKAAALCTAPIHKKALIDGAGFAYPGHTEFLAALGGVDHVVMMLASAALRVVPATIHIPLSAVPEVLTPDHLRRVITLTDRGLRDQFGLTAPRIAVTGLNPHAGEGGAMGQEEGDWIEALIREMQTEGYRLTGPHPADTLFHAAARARYDAAIAMYHDQALIPIKTLDFDKGVNVTLGLPFIRTSPDHGTAFDIAGKGLANPSSLIEALRLAQTMAKTRQP.

Substrate is bound by residues H132 and T133. Residues H162, H207, and H262 each contribute to the a divalent metal cation site. Substrate is bound by residues K270, N279, and R288.

The protein belongs to the PdxA family. As to quaternary structure, homodimer. The cofactor is Zn(2+). Requires Mg(2+) as cofactor. It depends on Co(2+) as a cofactor.

It localises to the cytoplasm. The enzyme catalyses 4-(phosphooxy)-L-threonine + NAD(+) = 3-amino-2-oxopropyl phosphate + CO2 + NADH. The protein operates within cofactor biosynthesis; pyridoxine 5'-phosphate biosynthesis; pyridoxine 5'-phosphate from D-erythrose 4-phosphate: step 4/5. In terms of biological role, catalyzes the NAD(P)-dependent oxidation of 4-(phosphooxy)-L-threonine (HTP) into 2-amino-3-oxo-4-(phosphooxy)butyric acid which spontaneously decarboxylates to form 3-amino-2-oxopropyl phosphate (AHAP). The protein is 4-hydroxythreonine-4-phosphate dehydrogenase of Ruegeria sp. (strain TM1040) (Silicibacter sp.).